Consider the following 454-residue polypeptide: Bifunctional protein GlmU (454 aa).

The segment at 1-225 (MNIVILAAGM…VWETLGVNSK (225 aa)) is pyrophosphorylase. UDP-N-acetyl-alpha-D-glucosamine contacts are provided by residues 6 to 9 (LAAG), Lys20, Gln71, 76 to 77 (GT), 98 to 100 (YGD), Gly135, Glu150, Asn165, and Asn223. Asp100 lines the Mg(2+) pocket. Mg(2+) is bound at residue Asn223. The segment at 226–246 (LQLAEVERIHQGNQARRLLEA) is linker. An N-acetyltransferase region spans residues 247-454 (GVTLLDPARI…WQRPVKQPKQ (208 aa)). 2 residues coordinate UDP-N-acetyl-alpha-D-glucosamine: Arg329 and Lys347. Residue His359 is the Proton acceptor of the active site. Residues Tyr362 and Asn373 each coordinate UDP-N-acetyl-alpha-D-glucosamine. Acetyl-CoA is bound by residues Ala376, 382 to 383 (NY), Ser401, Ala419, and Arg436.

This sequence in the N-terminal section; belongs to the N-acetylglucosamine-1-phosphate uridyltransferase family. It in the C-terminal section; belongs to the transferase hexapeptide repeat family. As to quaternary structure, homotrimer. Mg(2+) serves as cofactor.

Its subcellular location is the cytoplasm. It carries out the reaction alpha-D-glucosamine 1-phosphate + acetyl-CoA = N-acetyl-alpha-D-glucosamine 1-phosphate + CoA + H(+). The enzyme catalyses N-acetyl-alpha-D-glucosamine 1-phosphate + UTP + H(+) = UDP-N-acetyl-alpha-D-glucosamine + diphosphate. The protein operates within nucleotide-sugar biosynthesis; UDP-N-acetyl-alpha-D-glucosamine biosynthesis; N-acetyl-alpha-D-glucosamine 1-phosphate from alpha-D-glucosamine 6-phosphate (route II): step 2/2. It participates in nucleotide-sugar biosynthesis; UDP-N-acetyl-alpha-D-glucosamine biosynthesis; UDP-N-acetyl-alpha-D-glucosamine from N-acetyl-alpha-D-glucosamine 1-phosphate: step 1/1. Its pathway is bacterial outer membrane biogenesis; LPS lipid A biosynthesis. Its function is as follows. Catalyzes the last two sequential reactions in the de novo biosynthetic pathway for UDP-N-acetylglucosamine (UDP-GlcNAc). The C-terminal domain catalyzes the transfer of acetyl group from acetyl coenzyme A to glucosamine-1-phosphate (GlcN-1-P) to produce N-acetylglucosamine-1-phosphate (GlcNAc-1-P), which is converted into UDP-GlcNAc by the transfer of uridine 5-monophosphate (from uridine 5-triphosphate), a reaction catalyzed by the N-terminal domain. This is Bifunctional protein GlmU from Cupriavidus taiwanensis (strain DSM 17343 / BCRC 17206 / CCUG 44338 / CIP 107171 / LMG 19424 / R1) (Ralstonia taiwanensis (strain LMG 19424)).